The primary structure comprises 264 residues: Small ribosomal subunit protein uS3 (264 aa).

One can recognise a KH type-2 domain in the interval 39–107 (VREYLKKKLK…PVHVNIEEIR (69 aa)). Positions 217-264 (EEVAEEKRPRRNARPGDRRPRRDGEGAPAGARRGAPRRGGAGDGKTGE) are disordered. Residues 230 to 241 (RPGDRRPRRDGE) show a composition bias toward basic and acidic residues. Positions 253-264 (RRGGAGDGKTGE) are enriched in gly residues.

The protein belongs to the universal ribosomal protein uS3 family. In terms of assembly, part of the 30S ribosomal subunit. Forms a tight complex with proteins S10 and S14.

In terms of biological role, binds the lower part of the 30S subunit head. Binds mRNA in the 70S ribosome, positioning it for translation. The sequence is that of Small ribosomal subunit protein uS3 from Paraburkholderia phymatum (strain DSM 17167 / CIP 108236 / LMG 21445 / STM815) (Burkholderia phymatum).